Consider the following 252-residue polypeptide: Thiazole synthase (252 aa).

The Schiff-base intermediate with DXP role is filled by Lys98. 1-deoxy-D-xylulose 5-phosphate is bound by residues Gly159, 185 to 186, and 207 to 208; these read AG and AS.

It belongs to the ThiG family. As to quaternary structure, homotetramer. Forms heterodimers with either ThiH or ThiS.

Its subcellular location is the cytoplasm. It catalyses the reaction [ThiS sulfur-carrier protein]-C-terminal-Gly-aminoethanethioate + 2-iminoacetate + 1-deoxy-D-xylulose 5-phosphate = [ThiS sulfur-carrier protein]-C-terminal Gly-Gly + 2-[(2R,5Z)-2-carboxy-4-methylthiazol-5(2H)-ylidene]ethyl phosphate + 2 H2O + H(+). It functions in the pathway cofactor biosynthesis; thiamine diphosphate biosynthesis. Its function is as follows. Catalyzes the rearrangement of 1-deoxy-D-xylulose 5-phosphate (DXP) to produce the thiazole phosphate moiety of thiamine. Sulfur is provided by the thiocarboxylate moiety of the carrier protein ThiS. In vitro, sulfur can be provided by H(2)S. This is Thiazole synthase from Mycobacterium tuberculosis (strain ATCC 25177 / H37Ra).